We begin with the raw amino-acid sequence, 420 residues long: tRNA(Ile)-lysidine synthase (420 aa).

ATP is bound at residue Ser-28–Ser-33.

This sequence belongs to the tRNA(Ile)-lysidine synthase family.

It is found in the cytoplasm. It catalyses the reaction cytidine(34) in tRNA(Ile2) + L-lysine + ATP = lysidine(34) in tRNA(Ile2) + AMP + diphosphate + H(+). Its function is as follows. Ligates lysine onto the cytidine present at position 34 of the AUA codon-specific tRNA(Ile) that contains the anticodon CAU, in an ATP-dependent manner. Cytidine is converted to lysidine, thus changing the amino acid specificity of the tRNA from methionine to isoleucine. This Hydrogenovibrio crunogenus (strain DSM 25203 / XCL-2) (Thiomicrospira crunogena) protein is tRNA(Ile)-lysidine synthase.